The chain runs to 447 residues: N-succinylarginine dihydrolase (447 aa).

Substrate-binding positions include 19–28, Asn110, and 137–138; these read AGLSFGNEAS and HR. Glu174 is an active-site residue. Arg214 lines the substrate pocket. The active site involves His250. Substrate is bound by residues Asp252 and Asn365. Cys371 acts as the Nucleophile in catalysis.

This sequence belongs to the succinylarginine dihydrolase family. As to quaternary structure, homodimer.

It carries out the reaction N(2)-succinyl-L-arginine + 2 H2O + 2 H(+) = N(2)-succinyl-L-ornithine + 2 NH4(+) + CO2. It functions in the pathway amino-acid degradation; L-arginine degradation via AST pathway; L-glutamate and succinate from L-arginine: step 2/5. Catalyzes the hydrolysis of N(2)-succinylarginine into N(2)-succinylornithine, ammonia and CO(2). The sequence is that of N-succinylarginine dihydrolase from Acinetobacter baumannii (strain ACICU).